Here is a 218-residue protein sequence, read N- to C-terminus: Probable nicotinate-nucleotide adenylyltransferase (218 aa).

Belongs to the NadD family.

The enzyme catalyses nicotinate beta-D-ribonucleotide + ATP + H(+) = deamido-NAD(+) + diphosphate. It functions in the pathway cofactor biosynthesis; NAD(+) biosynthesis; deamido-NAD(+) from nicotinate D-ribonucleotide: step 1/1. In terms of biological role, catalyzes the reversible adenylation of nicotinate mononucleotide (NaMN) to nicotinic acid adenine dinucleotide (NaAD). This chain is Probable nicotinate-nucleotide adenylyltransferase, found in Acidithiobacillus ferrooxidans (strain ATCC 23270 / DSM 14882 / CIP 104768 / NCIMB 8455) (Ferrobacillus ferrooxidans (strain ATCC 23270)).